The primary structure comprises 602 residues: MRSVTNAFGNSGELNDQVDETGYRKFDIHEGILFCIELSETMFKESSDLEYKSPLLEILESLDELMSQLVITRPGTAIGCYFYYCNREDAKEGIYELFPLRDINATFMKKLNDLLEDLSSGRISLYDYFMFQQTGSEKQVRLSVLFTFMLDTFLEEIPGQKQLSNKRVFLFTDIDKPQEAQDIDERARLRRLTIDLFDNKVNFATFFIGYADKPFDNEFYSDILQLGSHTNENTGLDSEFDGPSTKPIDAKYIKSRILRKKEVKRIMFQCPLILDEKTNFIVGVKGYTMYTHEKAGVRYKLVYEHEDIRQEAYSKRKFLNPITGEDVTGKTVKVYPYGDLDINLSDSQDQIVMEAYTQKDAFLKIIGFRSSSKSIHYFNNIDKSSFIVPDEAKYEGSIRTLASLLKILRKKDKIAILWGKLKSNSHPSLYTLSPSSVKDYNEGFYLYRVPFLDEIRKFPSLLSYDDGSEHKLDYDNMKKVTQSIMGYFNLRDGYNPSDFKNPLLQKHYKVLHDYLLQIETTFDENETPNTKKDRMMREDDSLRKLYYIRNKILESEKSEDPIIQRLNKYVKIWNMFYKKFNDDNISIKEEKKPFDKKPKFNI.

Residues 268–483 (FQCPLILDEK…YDNMKKVTQS (216 aa)) enclose the Ku domain. Serine 370, serine 371, and serine 372 each carry phosphoserine.

This sequence belongs to the ku70 family. Heterodimer of YKU70/HDF1 and YKU80/HDF2. Sumoylated by MMS21.

Its subcellular location is the nucleus. It localises to the chromosome. The protein resides in the telomere. The catalysed reaction is ATP + H2O = ADP + phosphate + H(+). Its function is as follows. Single-stranded DNA-dependent ATP-dependent helicase. Involved in non-homologous end joining (NHEJ) DNA double strand break repair. DNA-binding is sequence-independent but has a high affinity to nicks in double-stranded DNA and to the ends of duplex DNA. Binds to naturally occurring chromosomal ends, and therefore provides chromosomal end protection. Appears to have a role in recruitment of telomerase and CDC13 to the telomere and the subsequent telomere elongation. Required also for telomere recombination to repair telomeric ends in the absence of telomerase. KU70, of the KU70/KU80 heterodimer, binds to the stem loop of TLC1, the RNA component of telomerase. Involved in telomere maintenance. Interacts with telomeric repeats and subtelomeric sequences thereby controlling telomere length and protecting against subtelomeric rearrangement. Maintains telomeric chromatin, which is involved in silencing the expression of genes located at the telomere. Required for mating-type switching. In Saccharomyces cerevisiae (strain ATCC 204508 / S288c) (Baker's yeast), this protein is ATP-dependent DNA helicase II subunit 1 (YKU70).